Here is a 1045-residue protein sequence, read N- to C-terminus: Septation initiation network scaffold protein cdc11 (1045 aa).

Residues 1 to 11 (MEQLWLEHDLS) are compositionally biased toward basic and acidic residues. Disordered regions lie at residues 1 to 269 (MEQL…NTKD) and 282 to 329 (RGRM…PSLS). The span at 18-39 (PQEQGSDNSSEPPTTSNVNNTQ) shows a compositional bias: polar residues. 3 stretches are compositionally biased toward low complexity: residues 40–52 (STGR…STEH), 96–132 (KQSP…NVSN), and 152–165 (ISSS…SEGS). A compositionally biased stretch (polar residues) spans 166 to 176 (LKSQQSNTRSN). Low complexity predominate over residues 187-201 (ASNASSSSSVVSSPS). Polar residues-rich tracts occupy residues 226–238 (NQLT…NSFE) and 320–329 (DSSNAFPSLS). Position 360 is a phosphoserine (S360). Residues 377-417 (DVGSSQSSSKTARLNSSPKSTLKTSSVKTRRSHSAQSSRKV) are disordered. Positions 379–403 (GSSQSSSKTARLNSSPKSTLKTSSV) are enriched in polar residues. Phosphoserine is present on S558. LRR repeat units follow at residues 604–625 (RIIQ…SELC), 627–646 (SIEE…GCPV), 647–668 (TIRD…SNLL), 669–690 (NLQY…SSLI), 691–712 (HLRE…QHLD), 713–734 (GLLK…NSNL), 736–757 (RLEE…SSLQ), 758–779 (NLMV…QPMI), 780–801 (HLRI…QFPH), 802–822 (LRTL…RRLK), 846–867 (DIRN…HMFL), 868–889 (GVRY…IATS), 892–913 (NLRV…KPLQ), 914–935 (MIHR…CDIL), and 940–962 (QLNV…IDDS). Residues 1005 to 1043 (AWRTRRKMYAEAILLACPHLEWLDGSDVSQSSRAAFTKS) enclose the LRRCT domain.

As to quaternary structure, interacts with sid4. When hyperphosphorylated, interacts with byr4. Also interacts with spg1, sid2, cdc13 and cdc16. In terms of processing, phosphorylated by cdc7 and cdk1. Hyperphosphorylated during anaphase. Dephosphorylated by par1.

The protein resides in the cytoplasm. Its subcellular location is the cytoskeleton. The protein localises to the microtubule organizing center. It localises to the spindle pole body. Essential for the onset of septum formation. Involved in the organization of astral microtubules during mitosis. Acts as a bridge between sid4 and the other SIN proteins mediating their association with the spindle pole body (SPB). The sid4-cdc11 complex organizes a signaling hub on the SPB which coordinates cell and nuclear division. The chain is Septation initiation network scaffold protein cdc11 (cdc11) from Schizosaccharomyces pombe (strain 972 / ATCC 24843) (Fission yeast).